A 339-amino-acid polypeptide reads, in one-letter code: Anthranilate phosphoribosyltransferase (339 aa).

5-phospho-alpha-D-ribose 1-diphosphate contacts are provided by residues glycine 82, glycine 85–aspartate 86, threonine 90, asparagine 92–threonine 95, and lysine 110–serine 118. Residue glycine 82 participates in anthranilate binding. Serine 94 lines the Mg(2+) pocket. Anthranilate is bound by residues asparagine 113 and arginine 168. 2 residues coordinate Mg(2+): aspartate 227 and glutamate 228.

Belongs to the anthranilate phosphoribosyltransferase family. As to quaternary structure, homodimer. Mg(2+) serves as cofactor.

The catalysed reaction is N-(5-phospho-beta-D-ribosyl)anthranilate + diphosphate = 5-phospho-alpha-D-ribose 1-diphosphate + anthranilate. Its pathway is amino-acid biosynthesis; L-tryptophan biosynthesis; L-tryptophan from chorismate: step 2/5. Catalyzes the transfer of the phosphoribosyl group of 5-phosphorylribose-1-pyrophosphate (PRPP) to anthranilate to yield N-(5'-phosphoribosyl)-anthranilate (PRA). In Clostridium beijerinckii (strain ATCC 51743 / NCIMB 8052) (Clostridium acetobutylicum), this protein is Anthranilate phosphoribosyltransferase.